The chain runs to 130 residues: Ribonuclease P protein component 2 (130 aa).

The protein belongs to the eukaryotic/archaeal RNase P protein component 2 family. As to quaternary structure, consists of a catalytic RNA component and at least 4-5 protein subunits.

The protein localises to the cytoplasm. It carries out the reaction Endonucleolytic cleavage of RNA, removing 5'-extranucleotides from tRNA precursor.. In terms of biological role, part of ribonuclease P, a protein complex that generates mature tRNA molecules by cleaving their 5'-ends. This is Ribonuclease P protein component 2 from Methanococcus maripaludis (strain C5 / ATCC BAA-1333).